The primary structure comprises 274 residues: NAD(P)H dehydrogenase [quinone] 1 (274 aa).

FAD contacts are provided by residues His-12, 18–19 (FN), and Gln-67. Ser-82 is modified (phosphoserine). 104–107 (LQWF) is a binding site for FAD. Residue 126–128 (AYT) participates in substrate binding. Residues 148–151 (TTGG), Tyr-156, and Arg-201 contribute to the FAD site. The tract at residues 225–274 (PSSLFDLNFQAGFLMKKEVQDEEKNKKFGLSVGHHLGKSIPTDNQIKARK) is important for apoenzyme conformational stability. Glycyl lysine isopeptide (Lys-Gly) (interchain with G-Cter in SUMO2) cross-links involve residues Lys-250 and Lys-251.

Belongs to the NAD(P)H dehydrogenase (quinone) family. Homodimer. Interacts with PDLIM4 isoform 2; this interaction stabilizes PDLIM4 isoform 2 in response to oxidative stress and protects it from ubiquitin-independent degradation by the core 20S proteasome. Interacts with TP73 (via SAM domain); this interaction is NADH-dependent, stabilizes TP73 in response to oxidative stress and protects it from ubiquitin-independent degradation by the 20S proteasome. Interacts with TP53; this interaction is NADH-dependent, stabilizes TP53 in response to oxidative stress and protects it from ubiquitin-independent degradation by the 20S proteasome. Requires FAD as cofactor.

It localises to the cytoplasm. It is found in the cytosol. The enzyme catalyses a quinone + NADH + H(+) = a quinol + NAD(+). The catalysed reaction is a quinone + NADPH + H(+) = a quinol + NADP(+). It catalyses the reaction ubiquinone-10 + NADH + H(+) = ubiquinol-10 + NAD(+). It carries out the reaction menadione + NADH + H(+) = menadiol + NAD(+). In terms of biological role, flavin-containing quinone reductase that catalyzes two-electron reduction of quinones to hydroquinones using either NADH or NADPH as electron donors. In a ping-pong kinetic mechanism, the electrons are sequentially transferred from NAD(P)H to flavin cofactor and then from reduced flavin to the quinone, bypassing the formation of semiquinone and reactive oxygen species. Regulates cellular redox state primarily through quinone detoxification. Reduces components of plasma membrane redox system such as coenzyme Q and vitamin quinones, producing antioxidant hydroquinone forms. In the process may function as superoxide scavenger to prevent hydroquinone oxidation and facilitate excretion. Alternatively, can activate quinones and their derivatives by generating redox reactive hydroquinones with DNA cross-linking antitumor potential. Acts as a gatekeeper of the core 20S proteasome known to degrade proteins with unstructured regions. Upon oxidative stress, interacts with tumor suppressors TP53 and TP73 in a NADH-dependent way and inhibits their ubiquitin-independent degradation by the 20S proteasome. This Pongo abelii (Sumatran orangutan) protein is NAD(P)H dehydrogenase [quinone] 1 (NQO1).